The following is a 224-amino-acid chain: Ribose-5-phosphate isomerase A (224 aa).

Residues 26–29 (TGST), 82–85 (DGAD), and 95–98 (KGGG) each bind substrate. Glutamate 104 acts as the Proton acceptor in catalysis. Lysine 122 serves as a coordination point for substrate.

This sequence belongs to the ribose 5-phosphate isomerase family. In terms of assembly, homodimer.

The catalysed reaction is aldehydo-D-ribose 5-phosphate = D-ribulose 5-phosphate. It participates in carbohydrate degradation; pentose phosphate pathway; D-ribose 5-phosphate from D-ribulose 5-phosphate (non-oxidative stage): step 1/1. Functionally, catalyzes the reversible conversion of ribose-5-phosphate to ribulose 5-phosphate. The sequence is that of Ribose-5-phosphate isomerase A from Lactococcus lactis subsp. cremoris (strain MG1363).